The sequence spans 86 residues: Large ribosomal subunit protein uL23 (86 aa).

The protein belongs to the universal ribosomal protein uL23 family. As to quaternary structure, part of the 50S ribosomal subunit. Contacts protein L29.

Functionally, binds to 23S rRNA. One of the proteins that surrounds the polypeptide exit tunnel on the outside of the ribosome. The chain is Large ribosomal subunit protein uL23 from Methanococcus aeolicus (strain ATCC BAA-1280 / DSM 17508 / OCM 812 / Nankai-3).